The following is a 516-amino-acid chain: Ribonuclease Y (516 aa).

A helical transmembrane segment spans residues 1-21 (MLIKIVIACVITAIIVALIAW). The KH domain occupies 206 to 269 (TISVVQLPND…ETARIALEKL (64 aa)). Residues 332–425 (ALKHSIEVAI…VQAADTISAA (94 aa)) enclose the HD domain.

It belongs to the RNase Y family.

Its subcellular location is the cell membrane. Functionally, endoribonuclease that initiates mRNA decay. This chain is Ribonuclease Y, found in Lachnoclostridium phytofermentans (strain ATCC 700394 / DSM 18823 / ISDg) (Clostridium phytofermentans).